Consider the following 262-residue polypeptide: Adenosylcobinamide-GDP ribazoletransferase (262 aa).

6 helical membrane passes run 43 to 63 (YFGLVGLLVGLLSAIVFWLTQ), 66 to 86 (LPAGVSVLLAMLVGVLLTGGF), 120 to 140 (GALALMLALLLKWQLLVELAL), 146 to 166 (AGSALIVAHTVSRVVSASIIF), 191 to 211 (LLILIASGVLVLLFLKGLAAL), and 242 to 262 (AAQQIAEIVCYFVLLVVGNIL).

This sequence belongs to the CobS family. Mg(2+) serves as cofactor.

The protein resides in the cell inner membrane. The catalysed reaction is alpha-ribazole + adenosylcob(III)inamide-GDP = adenosylcob(III)alamin + GMP + H(+). It carries out the reaction alpha-ribazole 5'-phosphate + adenosylcob(III)inamide-GDP = adenosylcob(III)alamin 5'-phosphate + GMP + H(+). It participates in cofactor biosynthesis; adenosylcobalamin biosynthesis; adenosylcobalamin from cob(II)yrinate a,c-diamide: step 7/7. In terms of biological role, joins adenosylcobinamide-GDP and alpha-ribazole to generate adenosylcobalamin (Ado-cobalamin). Also synthesizes adenosylcobalamin 5'-phosphate from adenosylcobinamide-GDP and alpha-ribazole 5'-phosphate. This is Adenosylcobinamide-GDP ribazoletransferase from Shewanella baltica (strain OS195).